A 93-amino-acid polypeptide reads, in one-letter code: Cell division protein FtsB (93 aa).

Residues 1 to 3 are Cytoplasmic-facing; that stretch reads MRV. The chain crosses the membrane as a helical span at residues 4-21; that stretch reads TLVVLLALFLALQYRLWF. At 22-93 the chain is on the periplasmic side; the sequence is GKNSLPDYWR…FFRLVPDRNP (72 aa). The stretch at 28–75 forms a coiled coil; that stretch reads DYWRLQQEVSNQKNTNENLERRNQLIYADIEDLREGEDALEERARNEL.

The protein belongs to the FtsB family. In terms of assembly, part of a complex composed of FtsB, FtsL and FtsQ.

It localises to the cell inner membrane. Essential cell division protein. May link together the upstream cell division proteins, which are predominantly cytoplasmic, with the downstream cell division proteins, which are predominantly periplasmic. The protein is Cell division protein FtsB of Idiomarina loihiensis (strain ATCC BAA-735 / DSM 15497 / L2-TR).